Consider the following 661-residue polypeptide: Acetyl-coenzyme A synthetase (661 aa).

CoA contacts are provided by residues 197–200 (RGGK) and threonine 320. ATP contacts are provided by residues 396–398 (GEP), 420–425 (DTWWQT), aspartate 511, and arginine 526. Residue serine 534 participates in CoA binding. Arginine 537 is a binding site for ATP. The Mg(2+) site is built by valine 548 and valine 553. N6-acetyllysine is present on lysine 620.

Belongs to the ATP-dependent AMP-binding enzyme family. Mg(2+) is required as a cofactor. Acetylated. Deacetylation by the SIR2-homolog deacetylase activates the enzyme.

The enzyme catalyses acetate + ATP + CoA = acetyl-CoA + AMP + diphosphate. In terms of biological role, catalyzes the conversion of acetate into acetyl-CoA (AcCoA), an essential intermediate at the junction of anabolic and catabolic pathways. AcsA undergoes a two-step reaction. In the first half reaction, AcsA combines acetate with ATP to form acetyl-adenylate (AcAMP) intermediate. In the second half reaction, it can then transfer the acetyl group from AcAMP to the sulfhydryl group of CoA, forming the product AcCoA. In Leptospira interrogans serogroup Icterohaemorrhagiae serovar Lai (strain 56601), this protein is Acetyl-coenzyme A synthetase.